A 475-amino-acid polypeptide reads, in one-letter code: MVQGTTSDAGKSVLVAGLCRVLARKGIKVAPFKPQNMALNSAVTKDGGEIGRAQAVQAQACNVEPTVHMNPVLIKPNSDTGAQIILQGKALSNMDAVGFHDYKRVAMGTVLDSFAKLTDEYESVMIEGAGSPAEINLRENDIANMGFAEEADVPVIIIADIDRGGVFAHLYGTLALLSESEQARVKGFVINRFRGDIGLLESGLDWLEEKTGKPVLGVLPFLHGLNLEAEDAITAEQELSSQVKLNVVVPVLTRISNHTDFDVLRLNPDINLRYVGKGEKIDKADLVILPGTKSVRDDLDYLRSQGWDKDIQRHIRLGGKVIGICGGYQMLGKLIDDPNGVEGSPGKSEGLGLLDITTTLTDSKQLTNTHAQLCLNGKTANVKGYEIHVGRSEVQGAQPLRLSSGEAEGAISECGQIMGTYLHGFFDEADVLSLVSEWVNGTQIKQQDFEQLKEKGINRIADAIAQHMNLDFLFK.

The region spanning Lys244–Val431 is the GATase cobBQ-type domain. Catalysis depends on Cys325, which acts as the Nucleophile. The active site involves His423.

The protein belongs to the CobB/CobQ family. CobQ subfamily.

It participates in cofactor biosynthesis; adenosylcobalamin biosynthesis. Functionally, catalyzes amidations at positions B, D, E, and G on adenosylcobyrinic A,C-diamide. NH(2) groups are provided by glutamine, and one molecule of ATP is hydrogenolyzed for each amidation. The sequence is that of Cobyric acid synthase from Vibrio campbellii (strain ATCC BAA-1116).